A 120-amino-acid polypeptide reads, in one-letter code: Large ribosomal subunit protein uL18 (120 aa).

It belongs to the universal ribosomal protein uL18 family. Part of the 50S ribosomal subunit; part of the 5S rRNA/L5/L18/L25 subcomplex. Contacts the 5S and 23S rRNAs.

Its function is as follows. This is one of the proteins that bind and probably mediate the attachment of the 5S RNA into the large ribosomal subunit, where it forms part of the central protuberance. The chain is Large ribosomal subunit protein uL18 from Rhodopseudomonas palustris (strain BisB18).